Reading from the N-terminus, the 441-residue chain is tRNA modification GTPase MnmE (441 aa).

3 residues coordinate (6S)-5-formyl-5,6,7,8-tetrahydrofolate: Arg21, Glu79, and Lys118. The TrmE-type G domain maps to 214-367 (GIHITILGAP…LVAELARVVE (154 aa)). GTP-binding positions include 224–229 (NAGKSS), 243–249 (SAQAGTT), and 268–271 (DTAG). Residues Ser228 and Thr249 each coordinate Mg(2+). Lys441 is a (6S)-5-formyl-5,6,7,8-tetrahydrofolate binding site.

This sequence belongs to the TRAFAC class TrmE-Era-EngA-EngB-Septin-like GTPase superfamily. TrmE GTPase family. In terms of assembly, homodimer. Heterotetramer of two MnmE and two MnmG subunits. K(+) serves as cofactor.

It is found in the cytoplasm. In terms of biological role, exhibits a very high intrinsic GTPase hydrolysis rate. Involved in the addition of a carboxymethylaminomethyl (cmnm) group at the wobble position (U34) of certain tRNAs, forming tRNA-cmnm(5)s(2)U34. This chain is tRNA modification GTPase MnmE, found in Paramagnetospirillum magneticum (strain ATCC 700264 / AMB-1) (Magnetospirillum magneticum).